The sequence spans 519 residues: ATP synthase subunit alpha 1 (519 aa).

Position 172–179 (Gly172–Thr179) interacts with ATP.

Belongs to the ATPase alpha/beta chains family. As to quaternary structure, F-type ATPases have 2 components, CF(1) - the catalytic core - and CF(0) - the membrane proton channel. CF(1) has five subunits: alpha(3), beta(3), gamma(1), delta(1), epsilon(1). CF(0) has three main subunits: a(1), b(2) and c(9-12). The alpha and beta chains form an alternating ring which encloses part of the gamma chain. CF(1) is attached to CF(0) by a central stalk formed by the gamma and epsilon chains, while a peripheral stalk is formed by the delta and b chains.

It localises to the cell inner membrane. It carries out the reaction ATP + H2O + 4 H(+)(in) = ADP + phosphate + 5 H(+)(out). In terms of biological role, produces ATP from ADP in the presence of a proton gradient across the membrane. The alpha chain is a regulatory subunit. The protein is ATP synthase subunit alpha 1 of Psychromonas ingrahamii (strain DSM 17664 / CCUG 51855 / 37).